Reading from the N-terminus, the 194-residue chain is Yellow fluorescent protein (194 aa).

2 Lumazine-binding repeats span residues 1–98 (MFKG…SGGH) and 99–194 (ILSA…NQCW). 179–183 (KVNVE) is an FMN binding site.

Homodimer. FMN serves as cofactor.

Its function is as follows. Antenna protein that modulates the color of the bioluminescence emission of the luciferase. In the presence of YFP and only at temperatures below 20 degrees Celsius, luciferase exhibits a bimodal emission spectrum with a new peak at 545 nM (yellow), in addition to the one at 485 nM. The chain is Yellow fluorescent protein (luxY) from Aliivibrio fischeri (Vibrio fischeri).